The primary structure comprises 760 residues: Rho GTPase-activating protein 26 (760 aa).

One can recognise a BAR domain in the interval 7–262 (EFSECCLDSP…MKENPHEHKN (256 aa)). The 105-residue stretch at 265–369 (PYTMEGYLYV…WMEAMDGREP (105 aa)) folds into the PH domain. The region spanning 383–568 (AQLDSIGFSI…ILIENHEKIF (186 aa)) is the Rho-GAP domain. Disordered regions lie at residues 571-617 (VPET…ESRN) and 658-701 (PNRP…SPIS). Residues 605–617 (HTAQPNEKQESRN) are compositionally biased toward polar residues. Low complexity predominate over residues 674-701 (LSPSWPMFSAPSSPMPTSSTSSDSSPIS). The 59-residue stretch at 702–760 (SPLRKARALYACKAEHDSELSFTAGTVFDNVHPSQEPGWLEGTLNGKTGLIPENYVEFL) folds into the SH3 domain.

In terms of assembly, binds to the C-terminus of PTK2/FAK1. As to expression, detected in embryonic brain and liver, and at low levels in embryonic eye, heart, lung, intestine and skeletal muscle.

The protein localises to the cell junction. The protein resides in the focal adhesion. It is found in the cytoplasm. It localises to the cytoskeleton. Its subcellular location is the endosome membrane. GTPase-activating protein for RHOA and CDC42. May be involved in the regulation of neosynthesized protein export through a Rab-endososomal dependent export route. The sequence is that of Rho GTPase-activating protein 26 (ARHGAP26) from Gallus gallus (Chicken).